The sequence spans 184 residues: Peptide deformylase 2 (184 aa).

Cys110 and His153 together coordinate Fe cation. Glu154 is an active-site residue. His157 serves as a coordination point for Fe cation.

The protein belongs to the polypeptide deformylase family. The cofactor is Fe(2+).

It catalyses the reaction N-terminal N-formyl-L-methionyl-[peptide] + H2O = N-terminal L-methionyl-[peptide] + formate. Removes the formyl group from the N-terminal Met of newly synthesized proteins. Requires at least a dipeptide for an efficient rate of reaction. N-terminal L-methionine is a prerequisite for activity but the enzyme has broad specificity at other positions. In Geobacillus stearothermophilus (Bacillus stearothermophilus), this protein is Peptide deformylase 2.